Here is a 416-residue protein sequence, read N- to C-terminus: MAYFLEQTDSEIFEFIVEEFKRQNEHLEMIASENYTFPSVMEAMGSILTNKYAEGYPNKRYYGGCEVVDKIESLAIERAKKLFNCQFANVQAHSGSQANNAVYHALLKLYDKILGMDLSCGGHLTHGAKVSLTGKHYQSFSYGVGLDGYIDYEEALKIAQSVKPQIIVCGFSAYPREIDFKKFREIADAVGALLLGDIAHVAGLVVANEHAHPFPHCHVVSSTTHKTLRGPRGGLILTNDEEIAAKIDKAIFPGTQGGPLMHVIAAKAVGFKENLKPEFKAYAKLVKSNMQVLAKTLKEKNHKLVSGGTSNHLLLMDFLDKPYSGKDADIALGNAGITVNKNTIPGETRNPFVTSGIRIGSAALSARGMGAKEFEIIGNKISDILNDINNVSLQLHVKEELKTMANQFPVYHQPIF.

Residues Leu118 and 122–124 (GHL) contribute to the (6S)-5,6,7,8-tetrahydrofolate site. Residue Lys226 is modified to N6-(pyridoxal phosphate)lysine. Glu242 serves as a coordination point for (6S)-5,6,7,8-tetrahydrofolate.

Belongs to the SHMT family. As to quaternary structure, homodimer. The cofactor is pyridoxal 5'-phosphate.

It localises to the cytoplasm. It catalyses the reaction (6R)-5,10-methylene-5,6,7,8-tetrahydrofolate + glycine + H2O = (6S)-5,6,7,8-tetrahydrofolate + L-serine. It participates in one-carbon metabolism; tetrahydrofolate interconversion. It functions in the pathway amino-acid biosynthesis; glycine biosynthesis; glycine from L-serine: step 1/1. Catalyzes the reversible interconversion of serine and glycine with tetrahydrofolate (THF) serving as the one-carbon carrier. This reaction serves as the major source of one-carbon groups required for the biosynthesis of purines, thymidylate, methionine, and other important biomolecules. Also exhibits THF-independent aldolase activity toward beta-hydroxyamino acids, producing glycine and aldehydes, via a retro-aldol mechanism. This is Serine hydroxymethyltransferase from Helicobacter pylori (strain J99 / ATCC 700824) (Campylobacter pylori J99).